Consider the following 210-residue polypeptide: Regulatory protein RecX (210 aa).

The segment at 28–47 (SRRQEEGAASSLFDREAEEK) is disordered.

The protein belongs to the RecX family.

It localises to the cytoplasm. In terms of biological role, modulates RecA activity. This Corynebacterium efficiens (strain DSM 44549 / YS-314 / AJ 12310 / JCM 11189 / NBRC 100395) protein is Regulatory protein RecX.